The following is a 367-amino-acid chain: 3-isopropylmalate dehydrogenase (367 aa).

75 to 88 (GPKWDGIERSKRPE) provides a ligand contact to NAD(+). Residues R95, R105, R133, and D230 each coordinate substrate. Positions 230, 254, and 258 each coordinate Mg(2+). Residue 288–300 (GSAPDIAGQDIAN) coordinates NAD(+).

It belongs to the isocitrate and isopropylmalate dehydrogenases family. LeuB type 1 subfamily. In terms of assembly, homodimer. It depends on Mg(2+) as a cofactor. Mn(2+) is required as a cofactor.

The protein resides in the cytoplasm. It catalyses the reaction (2R,3S)-3-isopropylmalate + NAD(+) = 4-methyl-2-oxopentanoate + CO2 + NADH. The protein operates within amino-acid biosynthesis; L-leucine biosynthesis; L-leucine from 3-methyl-2-oxobutanoate: step 3/4. Its function is as follows. Catalyzes the oxidation of 3-carboxy-2-hydroxy-4-methylpentanoate (3-isopropylmalate) to 3-carboxy-4-methyl-2-oxopentanoate. The product decarboxylates to 4-methyl-2 oxopentanoate. The protein is 3-isopropylmalate dehydrogenase of Psychrobacter cryohalolentis (strain ATCC BAA-1226 / DSM 17306 / VKM B-2378 / K5).